The sequence spans 303 residues: D-alanine--D-alanine ligase (303 aa).

Residues 103–293 (KTLFIKGGIP…FAQLCEKILE (191 aa)) enclose the ATP-grasp domain. 130–179 (PYVIKPSRQGSSIGIEFVYDIKELDQAIKKSTQYDHVVLAEALITGKELT) serves as a coordination point for ATP. 3 residues coordinate Mg(2+): Asp247, Glu260, and Asn262.

Belongs to the D-alanine--D-alanine ligase family. Mg(2+) serves as cofactor. It depends on Mn(2+) as a cofactor.

It localises to the cytoplasm. It catalyses the reaction 2 D-alanine + ATP = D-alanyl-D-alanine + ADP + phosphate + H(+). Its pathway is cell wall biogenesis; peptidoglycan biosynthesis. Cell wall formation. This Methylacidiphilum infernorum (isolate V4) (Methylokorus infernorum (strain V4)) protein is D-alanine--D-alanine ligase.